The sequence spans 488 residues: UDP-N-acetylmuramate--L-alanine ligase (488 aa).

An ATP-binding site is contributed by 127 to 133 (GTHGKTT).

The protein belongs to the MurCDEF family.

Its subcellular location is the cytoplasm. It catalyses the reaction UDP-N-acetyl-alpha-D-muramate + L-alanine + ATP = UDP-N-acetyl-alpha-D-muramoyl-L-alanine + ADP + phosphate + H(+). It participates in cell wall biogenesis; peptidoglycan biosynthesis. Its function is as follows. Cell wall formation. The chain is UDP-N-acetylmuramate--L-alanine ligase from Shewanella oneidensis (strain ATCC 700550 / JCM 31522 / CIP 106686 / LMG 19005 / NCIMB 14063 / MR-1).